A 617-amino-acid polypeptide reads, in one-letter code: RNA polymerase sigma factor RpoD (617 aa).

Positions 170-220 (PDDGSLPAEEVEPVNLKDDSADSKEKDDEEEESDDSSDSDDEGDGGPDPEE) are disordered. Positions 184–195 (NLKDDSADSKEK) are enriched in basic and acidic residues. Residues 196 to 218 (DDEEEESDDSSDSDDEGDGGPDP) are compositionally biased toward acidic residues. Residues 383-453 (MVEANLRLVI…TRSIADQART (71 aa)) are sigma-70 factor domain-2. Residues 407-410 (DLIQ) carry the Interaction with polymerase core subunit RpoC motif. Positions 462–538 (ETINKLNRIS…DSTMQSPIEM (77 aa)) are sigma-70 factor domain-3. A sigma-70 factor domain-4 region spans residues 551 to 604 (VLAGLTAREAKVLRMRFGIDMNTDHTLEEVGKQFDVTRERIRQIEAKALRKLRH). A DNA-binding region (H-T-H motif) is located at residues 577-596 (LEEVGKQFDVTRERIRQIEA).

It belongs to the sigma-70 factor family. RpoD/SigA subfamily. As to quaternary structure, interacts transiently with the RNA polymerase catalytic core.

The protein resides in the cytoplasm. Functionally, sigma factors are initiation factors that promote the attachment of RNA polymerase to specific initiation sites and are then released. This sigma factor is the primary sigma factor during exponential growth. This is RNA polymerase sigma factor RpoD from Pseudomonas aeruginosa (strain ATCC 15692 / DSM 22644 / CIP 104116 / JCM 14847 / LMG 12228 / 1C / PRS 101 / PAO1).